Here is a 794-residue protein sequence, read N- to C-terminus: Putative neurotrophin receptor LTRK 1 (794 aa).

Residues 1–33 form the signal peptide; it reads MRGPRRFRLWTRANVLTVISILTSILSGAGCSP. Residues 34–419 are Extracellular-facing; that stretch reads LSQLPSDNPA…PTEDFGPQTQ (386 aa). A disordered region spans residues 36-102; sequence QLPSDNPAHV…DQVPGDASRN (67 aa). Residues Asn64, Asn102, and Asn128 are each glycosylated (N-linked (GlcNAc...) asparagine). 2 LRR repeats span residues 181–202 and 205–226; these read CLKHLTIENCGLNNIQGIAFKT and SLETINLRHNHLTEFPQELLRT. The 44-residue stretch at 237–280 folds into the LRRCT domain; sequence NALTCSCTNLWLRSVDVAADRSEMTCSTRDGVSKMKMTQFKCEP. N-linked (GlcNAc...) asparagine glycans are attached at residues Asn288 and Asn374. A helical membrane pass occupies residues 420 to 440; that stretch reads VILPVVGVVILLISAVFIIYL. Residues 441 to 794 are Cytoplasmic-facing; it reads CQRAKHRSHA…GDPVYIDIIA (354 aa). In terms of domain architecture, Protein kinase spans 504–775; sequence ILLMRVIGEG…PQDRLTMKDI (272 aa). ATP-binding positions include 510–518 and Lys538; that span reads IGEGAFGRV. Asp647 serves as the catalytic Proton acceptor. A phosphotyrosine; by autocatalysis mark is found at Tyr673, Tyr677, Tyr678, and Tyr789.

The protein belongs to the protein kinase superfamily. Tyr protein kinase family. Insulin receptor subfamily. As to expression, expression is confined to the central nervous system and its associated endocrine tissues.

The protein localises to the membrane. The enzyme catalyses L-tyrosyl-[protein] + ATP = O-phospho-L-tyrosyl-[protein] + ADP + H(+). May bind an endogenous invertebrate neurotrophin. Binds human NT-3, but not NGF or BDNF. In Lymnaea stagnalis (Great pond snail), this protein is Putative neurotrophin receptor LTRK 1.